Here is a 63-residue protein sequence, read N- to C-terminus: Large ribosomal subunit protein bL35 (63 aa).

It belongs to the bacterial ribosomal protein bL35 family.

This chain is Large ribosomal subunit protein bL35, found in Campylobacter fetus subsp. fetus (strain 82-40).